A 144-amino-acid polypeptide reads, in one-letter code: MFLNTIGARDGSRPEKKRVGRGIGSTLGKTCGRGHKGQKARAGGFHKVGFEGGQMPLQRRLPKVGFRSAKKRFVAEVTLTQISKVGGGVIGLAELKEAGLVPTEAKRVKIIATGSVGGVVTVRGVGVTRGARAAIEAAGGKVES.

The interval 1-25 (MFLNTIGARDGSRPEKKRVGRGIGS) is disordered.

This sequence belongs to the universal ribosomal protein uL15 family. Part of the 50S ribosomal subunit.

Its function is as follows. Binds to the 23S rRNA. The sequence is that of Large ribosomal subunit protein uL15 from Methylococcus capsulatus (strain ATCC 33009 / NCIMB 11132 / Bath).